Reading from the N-terminus, the 214-residue chain is Adenylate kinase (214 aa).

10–15 is an ATP binding site; sequence GAGKGT. Residues 30–59 are NMP; that stretch reads STGDLLREEIANNTELGKQAKKLIDGGNLV. AMP-binding positions include threonine 31, arginine 36, 57 to 59, 83 to 86, and glutamine 90; these read NLV and GFPR. Residues 124 to 161 are LID; that stretch reads LRRQCKNCGNIFNLRFIKNFDGKCPKCGSTDIYQRADD. Arginine 125 serves as a coordination point for ATP. Positions 128 and 131 each coordinate Zn(2+). Position 134 to 135 (134 to 135) interacts with ATP; sequence IF. Zn(2+)-binding residues include cysteine 147 and cysteine 150. AMP-binding residues include arginine 158 and arginine 169. Lysine 197 lines the ATP pocket.

It belongs to the adenylate kinase family. As to quaternary structure, monomer.

Its subcellular location is the cytoplasm. The enzyme catalyses AMP + ATP = 2 ADP. Its pathway is purine metabolism; AMP biosynthesis via salvage pathway; AMP from ADP: step 1/1. In terms of biological role, catalyzes the reversible transfer of the terminal phosphate group between ATP and AMP. Plays an important role in cellular energy homeostasis and in adenine nucleotide metabolism. This is Adenylate kinase from Elusimicrobium minutum (strain Pei191).